A 289-amino-acid chain; its full sequence is G1/S-specific cyclin-D2 (289 aa).

Residues 26–151 enclose the Cyclin N-terminal domain; it reads VLQNLLTIEE…VVLGKLKWNL (126 aa). Residues 264–289 are disordered; that stretch reads DQGDGSKSEDELDQASTPTDVRDIDL. Residue S271 is modified to Phosphoserine. Position 280 is a phosphothreonine (T280).

This sequence belongs to the cyclin family. Cyclin D subfamily. In terms of assembly, interacts with either CDK4 or CDK6 protein kinase to form a serine/threonine kinase holoenzyme complex. The cyclin subunit imparts substrate specificity to the complex. Post-translationally, phosphorylation at Thr-280 by MAP kinases is required for ubiquitination and degradation by the DCX(AMBRA1) complex. Ubiquitinated by the DCX(AMBRA1) complex during the transition from G1 to S cell phase, leading to its degradation: ubiquitination is dependent on Thr-280 phosphorylation. The DCX(AMBRA1) complex represents the major regulator of CCND2 stability during the G1/S transition. Polyubiquitinated by the SCF(FBXL2) complex, leading to proteasomal degradation.

It is found in the nucleus. The protein localises to the cytoplasm. Its subcellular location is the nucleus membrane. Its function is as follows. Regulatory component of the cyclin D2-CDK4 (DC) complex that phosphorylates and inhibits members of the retinoblastoma (RB) protein family including RB1 and regulates the cell-cycle during G(1)/S transition. Phosphorylation of RB1 allows dissociation of the transcription factor E2F from the RB/E2F complex and the subsequent transcription of E2F target genes which are responsible for the progression through the G(1) phase. Hypophosphorylates RB1 in early G(1) phase. Cyclin D-CDK4 complexes are major integrators of various mitogenenic and antimitogenic signals. This is G1/S-specific cyclin-D2 (CCND2) from Bos taurus (Bovine).